We begin with the raw amino-acid sequence, 252 residues long: MLAKRIIPCLDVNRGRVVKGVNFVNLRDAGDPVELAAVYDREGADEVVFLDITASAEGRDIVLDMVRRTAEQVFIPFAVGGGIRTVEDIRAILKAGADKVSINTAAVKNPGLIAEAAEKFGTQCIVAAIDAKQTGSGKWEVYIHGGRTPTGLDAVEWARRVESLGAGEILLTSMDRDGTKDGYDLLLTRAVADAVRIPVIASGGVGTLEHIAEGLTEGGADAALAASIFHFGEYSIREVKEYLAARGIAVRL.

Residues Asp-11 and Asp-130 contribute to the active site.

It belongs to the HisA/HisF family. In terms of assembly, heterodimer of HisH and HisF.

The protein localises to the cytoplasm. The enzyme catalyses 5-[(5-phospho-1-deoxy-D-ribulos-1-ylimino)methylamino]-1-(5-phospho-beta-D-ribosyl)imidazole-4-carboxamide + L-glutamine = D-erythro-1-(imidazol-4-yl)glycerol 3-phosphate + 5-amino-1-(5-phospho-beta-D-ribosyl)imidazole-4-carboxamide + L-glutamate + H(+). Its pathway is amino-acid biosynthesis; L-histidine biosynthesis; L-histidine from 5-phospho-alpha-D-ribose 1-diphosphate: step 5/9. Its function is as follows. IGPS catalyzes the conversion of PRFAR and glutamine to IGP, AICAR and glutamate. The HisF subunit catalyzes the cyclization activity that produces IGP and AICAR from PRFAR using the ammonia provided by the HisH subunit. The chain is Imidazole glycerol phosphate synthase subunit HisF from Desulforudis audaxviator (strain MP104C).